A 228-amino-acid polypeptide reads, in one-letter code: Ephrin-A5 (228 aa).

The first 20 residues, 1 to 20, serve as a signal peptide directing secretion; the sequence is MLHVEMLTLVFLVLWMCVFS. An Ephrin RBD domain is found at 29–162; the sequence is ADRYAVYWNS…KLKVFVRPTN (134 aa). N37 carries an N-linked (GlcNAc...) asparagine glycan. Disulfide bonds link C62/C102 and C90/C151. The tract at residues 186–205 is disordered; that stretch reads EPADDTVHESAEPSRGENAA. A compositionally biased stretch (basic and acidic residues) spans 190–200; sequence DTVHESAEPSR. N203 carries the GPI-anchor amidated asparagine lipid modification. The propeptide at 204-228 is removed in mature form; that stretch reads AAQTPRIPSRLLAILLFLLAMLLTL.

It belongs to the ephrin family. In terms of assembly, binds to EPHB2. Interacts with EPHA8; activates EPHA8. Binds to the receptor tyrosine kinases EPHA2, EPHA3 and EPHB1. Forms a ternary EFNA5-EPHA3-ADAM10 complex mediating EFNA5 extracellular domain shedding by ADAM10 which regulates the EFNA5-EPHA3 complex internalization and function.

Its subcellular location is the cell membrane. It localises to the membrane. The protein localises to the caveola. Its function is as follows. Cell surface GPI-bound ligand for Eph receptors, a family of receptor tyrosine kinases which are crucial for migration, repulsion and adhesion during neuronal, vascular and epithelial development. Binds promiscuously Eph receptors residing on adjacent cells, leading to contact-dependent bidirectional signaling into neighboring cells. The signaling pathway downstream of the receptor is referred to as forward signaling while the signaling pathway downstream of the ephrin ligand is referred to as reverse signaling. Induces compartmentalized signaling within a caveolae-like membrane microdomain when bound to the extracellular domain of its cognate receptor. This signaling event requires the activity of the Fyn tyrosine kinase. Activates the EPHA3 receptor to regulate cell-cell adhesion and cytoskeletal organization. With the receptor EPHA2 may regulate lens fiber cells shape and interactions and be important for lens transparency maintenance. May function actively to stimulate axon fasciculation. The interaction of EFNA5 with EPHA5 also mediates communication between pancreatic islet cells to regulate glucose-stimulated insulin secretion. Cognate/functional ligand for EPHA7, their interaction regulates brain development modulating cell-cell adhesion and repulsion. This chain is Ephrin-A5 (EFNA5), found in Homo sapiens (Human).